Consider the following 336-residue polypeptide: Transcription factor MYB29 (336 aa).

HTH myb-type domains follow at residues 9–65 (GEGL…KPDI) and 66–116 (KRGE…KKLL). 2 DNA-binding regions (H-T-H motif) span residues 37–61 (WRDI…ANYL) and 89–112 (WSVI…NTHL). The interval 127–170 (KPLAYDSNPDEQSQSGSISPKSLPPSSSKNVPEITSSDETPKYD) is disordered. Residues 141 to 154 (SGSISPKSLPPSSS) show a composition bias toward low complexity. The segment covering 155–164 (KNVPEITSSD) has biased composition (polar residues).

In terms of assembly, can form complexes with MYC2, MYC3 or MYC4. As to expression, expressed in both vegetative and generative organs. Mostly present in seedlings, inflorescences, roots and stems, and, to a lower extent, in leaves (in midvein and trichomes) and siliques.

It localises to the nucleus. Its function is as follows. Plays a minor rheostat role in aliphatic glucosinolates (GLSs) biosynthesis, mostly short chained. Together with MYB28/HAG1 and MYB76/HAG2, promotes aliphatic glucosinolate biosynthesis but represses indolic glucosinolate biosynthesis. Prevents insect performance (e.g. lepidopteran insect Mamestra brassicae) by promoting glucosinolates. This chain is Transcription factor MYB29 (MYB29), found in Arabidopsis thaliana (Mouse-ear cress).